The primary structure comprises 421 residues: Testin (421 aa).

Residues 92-199 (MILTNPVAAR…GDVKLPCELD (108 aa)) form the PET domain. The segment at 134 to 164 (KQPVAGSEGAQYRKKQLAKQLPAHDQDPSKC) is disordered. Basic and acidic residues predominate over residues 155–164 (PAHDQDPSKC). 3 consecutive LIM zinc-binding domains span residues 234-297 (YSCY…CDSE), 299-359 (PRCA…NHAV), and 362-421 (QGCH…KMMS).

Belongs to the prickle / espinas / testin family. In terms of assembly, interacts via LIM domain 1 with ZYX. Interacts (via LIM domain 3) with ENAH and VASP. Interacts with ALKBH4, talin, actin, alpha-actinin, GRIP1 and PXN. Interacts (via LIM domain 2) with ACTL7A (via N-terminus). Heterodimer with ACTL7A; the heterodimer interacts with ENAH to form a heterotrimer.

The protein resides in the cytoplasm. It is found in the cell junction. Its subcellular location is the focal adhesion. Functionally, scaffold protein that may play a role in cell adhesion, cell spreading and in the reorganization of the actin cytoskeleton. Plays a role in the regulation of cell proliferation. May act as a tumor suppressor. This Eulemur macaco macaco (Black lemur) protein is Testin (TES).